Reading from the N-terminus, the 1412-residue chain is DNA-directed RNA polymerase subunit beta (1412 aa).

Belongs to the RNA polymerase beta chain family. As to quaternary structure, the RNAP catalytic core consists of 2 alpha, 1 beta, 1 beta' and 1 omega subunit. When a sigma factor is associated with the core the holoenzyme is formed, which can initiate transcription.

The catalysed reaction is RNA(n) + a ribonucleoside 5'-triphosphate = RNA(n+1) + diphosphate. In terms of biological role, DNA-dependent RNA polymerase catalyzes the transcription of DNA into RNA using the four ribonucleoside triphosphates as substrates. The sequence is that of DNA-directed RNA polymerase subunit beta from Bdellovibrio bacteriovorus (strain ATCC 15356 / DSM 50701 / NCIMB 9529 / HD100).